A 565-amino-acid polypeptide reads, in one-letter code: FACT complex subunit ctc-1 (565 aa).

Disordered regions lie at residues 151-173 (GNDG…ASAG) and 477-565 (LGDD…KKTA). The segment covering 152 to 165 (NDGGKSNGHSGTGG) has biased composition (gly residues). Acidic residues-rich tracts occupy residues 478–489 (GDDDMASSDEEA), 500–522 (DEDE…AEEY), and 532–553 (GSEE…DDDE).

This sequence belongs to the SSRP1 family. As to quaternary structure, forms a stable heterodimer with ctc-2/spt16. The dimer of ctc-1 and ctc-2 weakly associates with multiple molecules of nhp-1/nhp6 to form the FACT complex.

The protein localises to the nucleus. The protein resides in the chromosome. In terms of biological role, component of the FACT complex, a general chromatin factor that acts to reorganize nucleosomes. The FACT complex is involved in multiple processes that require DNA as a template such as mRNA elongation, DNA replication and DNA repair. During transcription elongation the FACT complex acts as a histone chaperone that both destabilizes and restores nucleosomal structure. It facilitates the passage of RNA polymerase II and transcription by promoting the dissociation of one histone H2A-H2B dimer from the nucleosome, then subsequently promotes the reestablishment of the nucleosome following the passage of RNA polymerase II. The sequence is that of FACT complex subunit ctc-1 (ctc-1) from Neurospora crassa (strain ATCC 24698 / 74-OR23-1A / CBS 708.71 / DSM 1257 / FGSC 987).